The chain runs to 160 residues: Transcription elongation factor GreA (160 aa).

Positions A50–S70 form a coiled coil.

Belongs to the GreA/GreB family.

In terms of biological role, necessary for efficient RNA polymerase transcription elongation past template-encoded arresting sites. The arresting sites in DNA have the property of trapping a certain fraction of elongating RNA polymerases that pass through, resulting in locked ternary complexes. Cleavage of the nascent transcript by cleavage factors such as GreA or GreB allows the resumption of elongation from the new 3'terminus. GreA releases sequences of 2 to 3 nucleotides. This Legionella pneumophila (strain Paris) protein is Transcription elongation factor GreA.